Here is a 350-residue protein sequence, read N- to C-terminus: Heat-inducible transcription repressor HrcA (350 aa).

Belongs to the HrcA family.

Functionally, negative regulator of class I heat shock genes (grpE-dnaK-dnaJ and groELS operons). Prevents heat-shock induction of these operons. This chain is Heat-inducible transcription repressor HrcA, found in Xanthomonas axonopodis pv. citri (strain 306).